Reading from the N-terminus, the 368-residue chain is Biotin synthase (368 aa).

The Radical SAM core domain maps to 46-277 (VHGDEVALCG…AAHIFVMGGR (232 aa)). [4Fe-4S] cluster is bound by residues C64, C68, and C71. Residues S109, C142, and C202 each contribute to the [2Fe-2S] cluster site. Residues 347-368 (RAAEPGGKRGLPVVGPPRGGCA) form a disordered region.

Belongs to the radical SAM superfamily. Biotin synthase family. As to quaternary structure, homodimer. [4Fe-4S] cluster serves as cofactor. It depends on [2Fe-2S] cluster as a cofactor.

It carries out the reaction (4R,5S)-dethiobiotin + (sulfur carrier)-SH + 2 reduced [2Fe-2S]-[ferredoxin] + 2 S-adenosyl-L-methionine = (sulfur carrier)-H + biotin + 2 5'-deoxyadenosine + 2 L-methionine + 2 oxidized [2Fe-2S]-[ferredoxin]. It functions in the pathway cofactor biosynthesis; biotin biosynthesis; biotin from 7,8-diaminononanoate: step 2/2. In terms of biological role, catalyzes the conversion of dethiobiotin (DTB) to biotin by the insertion of a sulfur atom into dethiobiotin via a radical-based mechanism. The polypeptide is Biotin synthase (Anaeromyxobacter sp. (strain Fw109-5)).